Consider the following 432-residue polypeptide: FLYWCH-type zinc finger-containing protein peb-1 (432 aa).

A disordered region spans residues 1-33 (MLGLEKPLSSDISSSSTDTSAISPISVSSMPLS). Positions 9–26 (SSDISSSSTDTSAISPIS) are enriched in low complexity. A DNA-binding region (required for DNA-binding) is located at residues 30–188 (MPLSPDKEKK…RNKEGKPRKP (159 aa)). The segment at 53 to 120 (IVTSFKGYQK…NACTKNTHNH (68 aa)) adopts an FLYWCH-type zinc-finger fold. The tract at residues 174–195 (SLVSARNKEGKPRKPKSKTSTN) is disordered.

The protein resides in the nucleus. Putative transcription factor. Binds to specific sequence motif 5'-[TC][AGT]TGCC[GA][AT]-3' in regulatory elements of target genes such as myosin myo-2. May modulate gene expression, perhaps acting in opposition to transcription factor pha-4. Involved in morphogenesis, perhaps especially in formation of the pharynx. Plays roles in molting, feeding and morphology. This Caenorhabditis briggsae protein is FLYWCH-type zinc finger-containing protein peb-1.